A 322-amino-acid polypeptide reads, in one-letter code: uncharacterized protein (322 aa).

Composition is skewed to basic residues over residues 1-16 (MPGN…KSGT) and 43-61 (LRPH…RRPV). The tract at residues 1 to 69 (MPGNSRRRGA…PVKRADETET (69 aa)) is disordered. Glycine 261, isoleucine 281, and leucine 290 together coordinate S-adenosyl-L-methionine.

This sequence belongs to the class IV-like SAM-binding methyltransferase superfamily. RNA methyltransferase TrmH family.

This is an uncharacterized protein from Mycobacterium tuberculosis (strain CDC 1551 / Oshkosh).